A 362-amino-acid chain; its full sequence is Protein-arginine kinase (362 aa).

The 232-residue stretch at 24–255 folds into the Phosphagen kinase C-terminal domain; that stretch reads IVLSSRIRLA…QQLIAQERMA (232 aa). ATP-binding positions include 27-31, H92, R126, 177-181, and 208-213; these read SSRIR, RASVM, and RGTYGE. The RDXXRA motif of the pArg binding pocket involved in allosteric regulation motif lies at 338–343; sequence RDVRRA.

Belongs to the ATP:guanido phosphotransferase family.

It catalyses the reaction L-arginyl-[protein] + ATP = N(omega)-phospho-L-arginyl-[protein] + ADP + H(+). With respect to regulation, appears to be allosterically activated by the binding of pArg-containing polypeptides to the pArg-binding pocket localized in the C-terminal domain of McsB. In terms of biological role, catalyzes the specific phosphorylation of arginine residues in a large number of proteins. Is part of the bacterial stress response system. Protein arginine phosphorylation has a physiologically important role and is involved in the regulation of many critical cellular processes, such as protein homeostasis, motility, competence, and stringent and stress responses, by regulating gene expression and protein activity. The chain is Protein-arginine kinase from Geobacillus sp. (strain WCH70).